Consider the following 122-residue polypeptide: Large ribosomal subunit protein uL14 (122 aa).

It belongs to the universal ribosomal protein uL14 family. In terms of assembly, part of the 50S ribosomal subunit. Forms a cluster with proteins L3 and L19. In the 70S ribosome, L14 and L19 interact and together make contacts with the 16S rRNA in bridges B5 and B8.

Binds to 23S rRNA. Forms part of two intersubunit bridges in the 70S ribosome. This chain is Large ribosomal subunit protein uL14, found in Hydrogenovibrio crunogenus (strain DSM 25203 / XCL-2) (Thiomicrospira crunogena).